A 76-amino-acid chain; its full sequence is Parvalbumin beta 3 (76 aa).

At Ala-1 the chain carries N-acetylalanine. The EF-hand domain occupies 31–66 (KSPEEVKKFFAIIDQDHSGFIEEEELKLFLQTFSAG). 6 residues coordinate Ca(2+): Asp-44, Asp-46, Ser-48, Phe-50, Glu-52, and Glu-55.

This sequence belongs to the parvalbumin family.

Functionally, in muscle, parvalbumin is thought to be involved in relaxation after contraction. It binds two calcium ions. The chain is Parvalbumin beta 3 from Merluccius polylepis (Southern hake).